Reading from the N-terminus, the 217-residue chain is Probable transaldolase (217 aa).

Lysine 83 (schiff-base intermediate with substrate) is an active-site residue.

This sequence belongs to the transaldolase family. Type 3B subfamily.

The protein localises to the cytoplasm. It carries out the reaction D-sedoheptulose 7-phosphate + D-glyceraldehyde 3-phosphate = D-erythrose 4-phosphate + beta-D-fructose 6-phosphate. The protein operates within carbohydrate degradation; pentose phosphate pathway; D-glyceraldehyde 3-phosphate and beta-D-fructose 6-phosphate from D-ribose 5-phosphate and D-xylulose 5-phosphate (non-oxidative stage): step 2/3. In terms of biological role, transaldolase is important for the balance of metabolites in the pentose-phosphate pathway. The chain is Probable transaldolase from Novosphingobium aromaticivorans (strain ATCC 700278 / DSM 12444 / CCUG 56034 / CIP 105152 / NBRC 16084 / F199).